Consider the following 210-residue polypeptide: Large ribosomal subunit protein uL3 (210 aa).

A disordered region spans residues 123–144 (KRHGQSRGPMAHGSRYHRRPGS).

This sequence belongs to the universal ribosomal protein uL3 family. As to quaternary structure, part of the 50S ribosomal subunit. Forms a cluster with proteins L14 and L19.

Its function is as follows. One of the primary rRNA binding proteins, it binds directly near the 3'-end of the 23S rRNA, where it nucleates assembly of the 50S subunit. In Alkaliphilus metalliredigens (strain QYMF), this protein is Large ribosomal subunit protein uL3.